The primary structure comprises 134 residues: Beta-synuclein (134 aa).

2 tandem repeats follow at residues 20-30 (EKTKQGVTEAA) and 31-41 (EKTKEGVLYVG). A 4 X 11 AA tandem repeats of [EGS]-K-T-K-[EQ]-[GQ]-V-X(4) region spans residues 20 to 67 (EKTKQGVTEAAEKTKEGVLYVGSKTREGVVQGVASVAEKTKEQASHLG). One copy of the 3; approximate repeat lies at 42-56 (SKTREGVVQGVASVA). Copy 4 of the repeat occupies 57–67 (EKTKEQASHLG). The interval 89-134 (FPTDLKPEEVAQEAAEEPLIEPLMEPEGESYEDPPQEEYQEYEPEA) is disordered. Over residues 98-134 (VAQEAAEEPLIEPLMEPEGESYEDPPQEEYQEYEPEA) the composition is skewed to acidic residues. The residue at position 118 (S118) is a Phosphoserine; by BARK1, CK2 and GRK5.

Belongs to the synuclein family. Phosphorylated. Phosphorylation by G-protein coupled receptor kinases (GRK) is more efficient than phosphorylation by CK1, CK2 and CaM-kinase II. In terms of tissue distribution, expressed predominantly in brain; concentrated in presynaptic nerve terminals.

It localises to the cytoplasm. In terms of biological role, non-amyloid component of senile plaques found in Alzheimer disease. Could act as a regulator of SNCA aggregation process. Protects neurons from staurosporine and 6-hydroxy dopamine (6OHDA)-stimulated caspase activation in a p53/TP53-dependent manner. Contributes to restore the SNCA anti-apoptotic function abolished by 6OHDA. Not found in the Lewy bodies associated with Parkinson disease. This Homo sapiens (Human) protein is Beta-synuclein (SNCB).